Reading from the N-terminus, the 298-residue chain is tRNA pseudouridine synthase B (298 aa).

Aspartate 42 functions as the Nucleophile in the catalytic mechanism.

The protein belongs to the pseudouridine synthase TruB family. Type 1 subfamily.

It carries out the reaction uridine(55) in tRNA = pseudouridine(55) in tRNA. In terms of biological role, responsible for synthesis of pseudouridine from uracil-55 in the psi GC loop of transfer RNAs. The polypeptide is tRNA pseudouridine synthase B (Mycobacterium tuberculosis (strain CDC 1551 / Oshkosh)).